Consider the following 285-residue polypeptide: Meiotically up-regulated gene 125 protein (285 aa).

The protein localises to the cytoplasm. It is found in the nucleus. In terms of biological role, has a role in meiosis. The protein is Meiotically up-regulated gene 125 protein (mug125) of Schizosaccharomyces pombe (strain 972 / ATCC 24843) (Fission yeast).